The sequence spans 288 residues: Oxaloacetate decarboxylase (288 aa).

Serine 47 serves as a coordination point for substrate. Aspartate 85 contributes to the Mg(2+) binding site. Residues arginine 156 and histidine 232 each contribute to the substrate site.

This sequence belongs to the isocitrate lyase/PEP mutase superfamily. Oxaloacetate decarboxylase family. As to quaternary structure, homotetramer; dimer of dimers. The cofactor is Mg(2+).

The enzyme catalyses oxaloacetate + H(+) = pyruvate + CO2. Catalyzes the decarboxylation of oxaloacetate into pyruvate. Seems to play a role in maintaining cellular concentrations of bicarbonate and pyruvate. The sequence is that of Oxaloacetate decarboxylase from Bradyrhizobium sp. (strain BTAi1 / ATCC BAA-1182).